We begin with the raw amino-acid sequence, 195 residues long: GTP cyclohydrolase-2 (195 aa).

48–52 (RIHSE) contributes to the GTP binding site. Cys-53, Cys-64, and Cys-66 together coordinate Zn(2+). GTP contacts are provided by residues Gln-69, 90 to 92 (EGR), and Thr-112. Catalysis depends on Asp-124, which acts as the Proton acceptor. Arg-126 serves as the catalytic Nucleophile. GTP-binding residues include Thr-147 and Lys-152.

Belongs to the GTP cyclohydrolase II family. Requires Zn(2+) as cofactor.

The enzyme catalyses GTP + 4 H2O = 2,5-diamino-6-hydroxy-4-(5-phosphoribosylamino)-pyrimidine + formate + 2 phosphate + 3 H(+). It participates in cofactor biosynthesis; riboflavin biosynthesis; 5-amino-6-(D-ribitylamino)uracil from GTP: step 1/4. Catalyzes the conversion of GTP to 2,5-diamino-6-ribosylamino-4(3H)-pyrimidinone 5'-phosphate (DARP), formate and pyrophosphate. The chain is GTP cyclohydrolase-2 from Campylobacter fetus subsp. fetus (strain 82-40).